The chain runs to 199 residues: Probable GTP-binding protein EngB (199 aa).

The EngB-type G domain maps to 28–199 (DLPEIALAGR…DSWDAILEQV (172 aa)). Residues 36–43 (GRSNVGKS), 63–67 (GKTQL), 81–84 (DVPG), 148–151 (TKAD), and 180–182 (FSS) each bind GTP. Mg(2+)-binding residues include Ser-43 and Thr-65.

Belongs to the TRAFAC class TrmE-Era-EngA-EngB-Septin-like GTPase superfamily. EngB GTPase family. The cofactor is Mg(2+).

Functionally, necessary for normal cell division and for the maintenance of normal septation. In Streptococcus pyogenes serotype M49 (strain NZ131), this protein is Probable GTP-binding protein EngB.